The sequence spans 286 residues: Ribosomal RNA small subunit methyltransferase A (286 aa).

S-adenosyl-L-methionine-binding residues include asparagine 28, leucine 30, glycine 55, glutamate 77, aspartate 103, and asparagine 123.

Belongs to the class I-like SAM-binding methyltransferase superfamily. rRNA adenine N(6)-methyltransferase family. RsmA subfamily.

The protein localises to the cytoplasm. It catalyses the reaction adenosine(1518)/adenosine(1519) in 16S rRNA + 4 S-adenosyl-L-methionine = N(6)-dimethyladenosine(1518)/N(6)-dimethyladenosine(1519) in 16S rRNA + 4 S-adenosyl-L-homocysteine + 4 H(+). Its function is as follows. Specifically dimethylates two adjacent adenosines (A1518 and A1519) in the loop of a conserved hairpin near the 3'-end of 16S rRNA in the 30S particle. May play a critical role in biogenesis of 30S subunits. The polypeptide is Ribosomal RNA small subunit methyltransferase A (Rhodopseudomonas palustris (strain BisB18)).